Here is a 232-residue protein sequence, read N- to C-terminus: RNA chaperone ProQ (232 aa).

The disordered stretch occupies residues Glu105–Asp182. Positions Gln117 to Arg136 are enriched in basic and acidic residues. A compositionally biased stretch (basic residues) spans Arg137–Pro146. Basic and acidic residues predominate over residues Arg147–His177.

It belongs to the ProQ family.

It is found in the cytoplasm. RNA chaperone with significant RNA binding, RNA strand exchange and RNA duplexing activities. May regulate ProP activity through an RNA-based, post-transcriptional mechanism. The chain is RNA chaperone ProQ from Shigella flexneri serotype 5b (strain 8401).